We begin with the raw amino-acid sequence, 259 residues long: DNA-directed RNA polymerase 30 kDa polypeptide (259 aa).

The segment at 155 to 195 (YNTPCPNCKSRNTTPMMIQTRAADEPPLVRHACRDCKQHFK) adopts a TFIIS-type zinc-finger fold. Zn(2+)-binding residues include cysteine 159, cysteine 162, cysteine 187, and cysteine 190. The tract at residues 214–259 (ENKEITEILPDNNPSPPESPEPASPIDDGLIRSTFDRNDEPPEDDE) is disordered. Residues 226-236 (NPSPPESPEPA) are compositionally biased toward pro residues.

It belongs to the poxviridae DNA-directed RNA polymerase 30 kDa subunit family. As to quaternary structure, the DNA-dependent RNA polymerase (vRNAP) consists of eight subunits encoded by early viral genes and termed according to their apparent molecular masses Rpo147, Rpo132, Rpo35, Rpo30, Rpo22, Rpo19, Rpo18, and Rpo7. The same holoenzyme, with the addition of the transcription-specificity factor RAP94, is used for early gene expression.

The protein localises to the virion. Its subcellular location is the host cytoplasm. The catalysed reaction is RNA(n) + a ribonucleoside 5'-triphosphate = RNA(n+1) + diphosphate. Its function is as follows. Part of the DNA-dependent RNA polymerase which catalyzes the transcription of viral DNA into RNA using the four ribonucleoside triphosphates as substrates. Responsible for the transcription of early, intermediate and late genes. DNA-dependent RNA polymerase associates with the early transcription factor (ETF), itself composed of OPG118/D6 and OPG134/A8, thereby allowing the early genes transcription. Late transcription, and probably also intermediate transcription, require newly synthesized RNA polymerase. This chain is DNA-directed RNA polymerase 30 kDa polypeptide (OPG066), found in Homo sapiens (Human).